Consider the following 304-residue polypeptide: 4-diphosphocytidyl-2-C-methyl-D-erythritol kinase (304 aa).

Residue Lys23 is part of the active site. Residue 111 to 121 coordinates ATP; the sequence is PIGGGLGGGSS. Residue Asp153 is part of the active site.

The protein belongs to the GHMP kinase family. IspE subfamily. Homodimer.

It carries out the reaction 4-CDP-2-C-methyl-D-erythritol + ATP = 4-CDP-2-C-methyl-D-erythritol 2-phosphate + ADP + H(+). The protein operates within isoprenoid biosynthesis; isopentenyl diphosphate biosynthesis via DXP pathway; isopentenyl diphosphate from 1-deoxy-D-xylulose 5-phosphate: step 3/6. Its function is as follows. Catalyzes the phosphorylation of the position 2 hydroxy group of 4-diphosphocytidyl-2C-methyl-D-erythritol. The chain is 4-diphosphocytidyl-2-C-methyl-D-erythritol kinase from Wigglesworthia glossinidia brevipalpis.